The following is a 450-amino-acid chain: 3-phosphoshikimate 1-carboxyvinyltransferase (450 aa).

3-phosphoshikimate-binding residues include Lys-28, Ser-29, and Arg-33. A phosphoenolpyruvate-binding site is contributed by Lys-28. Phosphoenolpyruvate is bound by residues Gly-100 and Arg-128. 3-phosphoshikimate contacts are provided by Ser-173, Gln-175, Asp-326, and Lys-353. Position 175 (Gln-175) interacts with phosphoenolpyruvate. Asp-326 serves as the catalytic Proton acceptor. Residues Arg-357 and Arg-402 each coordinate phosphoenolpyruvate.

The protein belongs to the EPSP synthase family. As to quaternary structure, monomer.

It localises to the cytoplasm. It catalyses the reaction 3-phosphoshikimate + phosphoenolpyruvate = 5-O-(1-carboxyvinyl)-3-phosphoshikimate + phosphate. The protein operates within metabolic intermediate biosynthesis; chorismate biosynthesis; chorismate from D-erythrose 4-phosphate and phosphoenolpyruvate: step 6/7. Functionally, catalyzes the transfer of the enolpyruvyl moiety of phosphoenolpyruvate (PEP) to the 5-hydroxyl of shikimate-3-phosphate (S3P) to produce enolpyruvyl shikimate-3-phosphate and inorganic phosphate. This Brucella melitensis biotype 2 (strain ATCC 23457) protein is 3-phosphoshikimate 1-carboxyvinyltransferase.